The sequence spans 860 residues: Leucine--tRNA ligase (860 aa).

The 'HIGH' region motif lies at 42–52; the sequence is PYPSGRLHMGH. Positions 619-623 match the 'KMSKS' region motif; it reads KMSKS. Lysine 622 contacts ATP.

The protein belongs to the class-I aminoacyl-tRNA synthetase family.

It localises to the cytoplasm. The enzyme catalyses tRNA(Leu) + L-leucine + ATP = L-leucyl-tRNA(Leu) + AMP + diphosphate. The chain is Leucine--tRNA ligase from Salmonella agona (strain SL483).